The sequence spans 1248 residues: Apoptotic protease-activating factor 1 (1248 aa).

One can recognise a CARD domain in the interval 1–90 (MDAKARNCLL…KDLAALLHDG (90 aa)). The NB-ARC domain occupies 104 to 415 (SGITSYVRTV…METEEVEDIL (312 aa)). ATP-binding positions include 154–161 (GMAGCGKS) and R265. The WD 1-1 repeat unit spans residues 613 to 652 (PHTDAVYHACFSEDGQRIASCGADKTLQVFKAETGEKLLE). The stretch at 655 to 694 (AHEDEVLCCAFSTDDRFIATCSVDKKVKIWNSMTGELVHT) is one WD 1-2 repeat. The WD 1-3 repeat unit spans residues 697–738 (EHSEQVNCCHFTNSSHHLLLATGSSDCFLKLWDLNQKECRNT). A WD 1-4 repeat occupies 741–780 (GHTNSVNHCRFSPDDKLLASCSADGTLKLWDATSANERKS). One copy of the WD 1-5 repeat lies at 796–836 (DMEVIVKCCSWSADGARIMVAAKNKIFLFDIHTSGLLGEIH). The WD 1-6 repeat unit spans residues 838–877 (GHHSTIQYCDFSPQNHLAVVALSQYCVELWNTDSRSKVAD). The WD 1-7 repeat unit spans residues 880–910 (GHLSWVHGVMFSPDGSSFLTSSDDQTIRLWE). Residues 910-921 (ETKKVCKNSAVM) form an interpropeller linker region. One copy of the WD 2-1 repeat lies at 922–958 (LKQEVDVVFQENEVMVLAVDHIRRLQLINGRTGQIDY). The WD 2-2 repeat unit spans residues 959 to 998 (LTEAQVSCCCLSPHLQYIAFGDENGAIEILELVNNRIFQS). A WD 2-3 repeat occupies 1001 to 1040 (QHKKTVWHIQFTADEKTLISSSDDAEIQVWNWQLDKCIFL). The stretch at 1042–1080 (GHQETVKDFRLLKNSRLLSWSFDGTVKVWNIITGNKEKD) is one WD 2-4 repeat. The WD 2-5 repeat unit spans residues 1083–1122 (CHQGTVLSCDISHDATKFSSTSADKTAKIWSFDLLLPLHE). The stretch at 1125–1164 (GHNGCVRCSAFSVDSTLLATGDDNGEIRIWNVSNGELLHL) is one WD 2-6 repeat. The stretch at 1175–1212 (THGGWVTDLCFSPDGKMLISAGGYIKWWNVVTGESSQT) is one WD 2-7 repeat. The stretch at 1213 to 1248 (FYTNGTNLKKIHVSPDFKTYVTVDNLGILYILQTLE) is one WD 2-8 repeat.

As to quaternary structure, monomer. Oligomerizes to a heptameric ring, known as the apoptosome, upon binding of cytochrome c and dATP. Oligomeric Apaf-1 and pro-caspase-9 bind to each other via their respective NH2-terminal CARD domains and consecutively mature caspase-9 is released from the complex. Pro-caspase-3 is recruited into the Apaf-1-pro-caspase-9 complex via interaction with pro-caspase-9. Interacts with APIP. Interacts (via CARD and NACHT domains) with NAIP/BIRC1 (via NACHT domain). Interacts with CIAO2A. Ubiquitous. Highest levels of expression in adult spleen and peripheral blood leukocytes, and in fetal brain, kidney and lung. Isoform 1 is expressed in heart, kidney and liver.

It is found in the cytoplasm. In terms of biological role, oligomeric Apaf-1 mediates the cytochrome c-dependent autocatalytic activation of pro-caspase-9 (Apaf-3), leading to the activation of caspase-3 and apoptosis. This activation requires ATP. Isoform 6 is less effective in inducing apoptosis. The protein is Apoptotic protease-activating factor 1 of Homo sapiens (Human).